The primary structure comprises 190 residues: Segregation and condensation protein B (190 aa).

It belongs to the ScpB family. In terms of assembly, homodimer. Homodimerization may be required to stabilize the binding of ScpA to the Smc head domains. Component of a cohesin-like complex composed of ScpA, ScpB and the Smc homodimer, in which ScpA and ScpB bind to the head domain of Smc. The presence of the three proteins is required for the association of the complex with DNA.

It localises to the cytoplasm. Its function is as follows. Participates in chromosomal partition during cell division. May act via the formation of a condensin-like complex containing Smc and ScpA that pull DNA away from mid-cell into both cell halves. In Bacillus cereus (strain ATCC 10987 / NRS 248), this protein is Segregation and condensation protein B.